Here is a 62-residue protein sequence, read N- to C-terminus: Large ribosomal subunit protein eL37 (62 aa).

Zn(2+)-binding residues include C20, C23, C35, and C38. A C4-type zinc finger spans residues 20–38; sequence CRRCGRRAYHVRKGYCAAC.

This sequence belongs to the eukaryotic ribosomal protein eL37 family. Zn(2+) is required as a cofactor.

In terms of biological role, binds to the 23S rRNA. This chain is Large ribosomal subunit protein eL37, found in Methanopyrus kandleri (strain AV19 / DSM 6324 / JCM 9639 / NBRC 100938).